Consider the following 603-residue polypeptide: Polypeptide N-acetylgalactosaminyltransferase 10 (603 aa).

Over 1 to 11 (MRRKEKRLLQA) the chain is Cytoplasmic. Residues 12–31 (VALALAALVLLPNVGLWALY) traverse the membrane as a helical; Signal-anchor for type II membrane protein segment. Topologically, residues 32 to 603 (RERQPDGSPG…STVLENFNKN (572 aa)) are lumenal. 2 N-linked (GlcNAc...) asparagine glycosylation sites follow: Asn124 and Asn146. 5 disulfides stabilise this stretch: Cys135–Cys365, Cys356–Cys432, Cys471–Cys488, Cys523–Cys538, and Cys563–Cys578. The segment at 144–253 (LPNTSIIIPF…VNWLPPLLDR (110 aa)) is catalytic subdomain A. The substrate site is built by Asp185 and Arg214. Asp237 lines the Mn(2+) pocket. Residue Ser238 coordinates substrate. His239 is a Mn(2+) binding site. The catalytic subdomain B stretch occupies residues 311–373 (PFESPVMAGG…PCSRVGHIYR (63 aa)). Trp342 lines the substrate pocket. A Mn(2+)-binding site is contributed by His370. The substrate site is built by Arg373 and Tyr378. Residues 373 to 384 (RKYVPYKVPAGV) are flexible loop. The 133-residue stretch at 458–590 (AAWGEIRNVG…SSLTQQWLFE (133 aa)) folds into the Ricin B-type lectin domain. Asn593 carries an N-linked (GlcNAc...) asparagine glycan.

This sequence belongs to the glycosyltransferase 2 family. GalNAc-T subfamily. It depends on Mn(2+) as a cofactor. As to expression, expressed at higher level than GALNT9. In the developing hindbrain region of 14.5 dpc embryos it accumulates in the rapidly dividing, undifferentiated ventricular zone adjacent to the pons. It also accumulates in the regions immediately rostral and caudal to the dorsal rhombic lips differentiating into the cerebellum. Not expressed in the developing choroid plexus.

The protein localises to the golgi apparatus membrane. It catalyses the reaction L-seryl-[protein] + UDP-N-acetyl-alpha-D-galactosamine = a 3-O-[N-acetyl-alpha-D-galactosaminyl]-L-seryl-[protein] + UDP + H(+). The catalysed reaction is L-threonyl-[protein] + UDP-N-acetyl-alpha-D-galactosamine = a 3-O-[N-acetyl-alpha-D-galactosaminyl]-L-threonyl-[protein] + UDP + H(+). It participates in protein modification; protein glycosylation. Its function is as follows. Catalyzes the initial reaction in O-linked oligosaccharide biosynthesis, the transfer of an N-acetyl-D-galactosamine residue to a serine or threonine residue on the protein receptor. Has activity toward Muc5Ac and EA2 peptide substrates. In Mus musculus (Mouse), this protein is Polypeptide N-acetylgalactosaminyltransferase 10 (Galnt10).